The chain runs to 505 residues: MSYPGYPPPPGGYPPAAPGGGPWGGAAYPPPPSMPPIGLDNVATYAGQFNQDYLSGMAANMSGTFGGANMPNLYPGAPGAGYPPVPPGGFGQPPSAQQPVPPYGMYPPPGGNPPSRMPSYPPYPGAPVPGQPMPPPGQQPPGAYPGQPPVTYPGQPPVPLPGQQQPVPSYPGYPGSGTVTPAVPPTQFGSRGTITDAPGFDPLRDAEVLRKAMKGFGTDEQAIIDCLGSRSNKQRQQILLSFKTAYGKDLIKDLKSELSGNFEKTILALMKTPVLFDIYEIKEAIKGVGTDEACLIEILASRSNEHIRELNRAYKAEFKKTLEEAIRSDTSGHFQRLLISLSQGNRDESTNVDMSLAQRDAQELYAAGENRLGTDESKFNAVLCSRSRAHLVAVFNEYQRMTGRDIEKSICREMSGDLEEGMLAVVKCLKNTPAFFAERLNKAMRGAGTKDRTLIRIMVSRSETDLLDIRSEYKRMYGKSLYHDISGDTSGDYRKILLKICGGND.

Composition is skewed to pro residues over residues 1-17 and 99-160; these read MSYP…PPAA and PVPP…PVPL. Disordered regions lie at residues 1–38 and 84–199; these read MSYP…PPIG and PVPP…DAPG. The span at 161–177 shows a compositional bias: low complexity; the sequence is PGQQQPVPSYPGYPGSG. 4 Annexin repeats span residues 200-271, 272-343, 355-427, and 431-502; these read FDPL…ALMK, TPVL…SLSQ, SLAQ…AVVK, and NTPA…KICG. N6-acetyllysine is present on residues K248 and K255. The residue at position 479 (K479) is an N6-acetyllysine.

The protein belongs to the annexin family. As to quaternary structure, interacts with S100A6. Interacts with PDCD6 in a calcium-dependent manner. Interacts with KIF23 during cytokinesis.

Its subcellular location is the cytoplasm. The protein localises to the melanosome. It localises to the nucleus envelope. The protein resides in the nucleus. It is found in the nucleoplasm. Its subcellular location is the cytoskeleton. The protein localises to the spindle. Its function is as follows. Binds specifically to calcyclin in a calcium-dependent manner. Required for midbody formation and completion of the terminal phase of cytokinesis. This chain is Annexin A11 (ANXA11), found in Homo sapiens (Human).